The following is a 956-amino-acid chain: GAS2-like protein 2B (956 aa).

The region spanning 23-150 (YAMKEDLAEW…CLLELARRAS (128 aa)) is the Calponin-homology (CH) domain. The GAR domain maps to 191 to 263 (CDFKNLDQMV…HYLDKHDPCH (73 aa)). Polar residues-rich tracts occupy residues 332 to 353 (SSSY…QTPP) and 381 to 390 (DPQQLGNPQS). Disordered stretches follow at residues 332–361 (SSSY…SMSI), 378–406 (DTQD…ASQL), 853–885 (RPKI…SRNN), and 914–956 (VNSE…ESWV). The span at 859–868 (RRDNRPEKKP) shows a compositional bias: basic and acidic residues.

The protein belongs to the GAS2 family.

Its subcellular location is the cytoplasm. It is found in the cytoskeleton. It localises to the cilium basal body. In terms of biological role, together with gas2l2.L, regulates ciliary orientation and performance. This is GAS2-like protein 2B from Xenopus laevis (African clawed frog).